Here is a 298-residue protein sequence, read N- to C-terminus: MSSQRLRIAIQKKGRLSKECQELFKRCGMKFNISGERLVVHSENMPIDLLLVRDDDIPSLIMDGVVDLGVIGENELEEVRLERKALGEPSSFTTLRRLDFGGCRLSIAIDKDEVYNGPQDLAGKRIATTYPQLLKSFMDEQGIPFSTCILNGSVEVAPRAGLADAIADLVSTGATLEANGLKEAEVIFRSKATLIQREGEFDADKAALINKLLTRMQGCIQAKESKYIMLHAPTDKLDAIKDLLPGAEDPTVLPLSRDGAKVAVHLVSTENLFWETMEQLKALGASSILVLPIEKMME.

The protein belongs to the ATP phosphoribosyltransferase family. Long subfamily. The cofactor is Mg(2+).

It localises to the cytoplasm. It carries out the reaction 1-(5-phospho-beta-D-ribosyl)-ATP + diphosphate = 5-phospho-alpha-D-ribose 1-diphosphate + ATP. The protein operates within amino-acid biosynthesis; L-histidine biosynthesis; L-histidine from 5-phospho-alpha-D-ribose 1-diphosphate: step 1/9. Its activity is regulated as follows. Feedback inhibited by histidine. In terms of biological role, catalyzes the condensation of ATP and 5-phosphoribose 1-diphosphate to form N'-(5'-phosphoribosyl)-ATP (PR-ATP). Has a crucial role in the pathway because the rate of histidine biosynthesis seems to be controlled primarily by regulation of HisG enzymatic activity. This chain is ATP phosphoribosyltransferase, found in Aliivibrio fischeri (strain MJ11) (Vibrio fischeri).